Reading from the N-terminus, the 552-residue chain is CTP synthase (552 aa).

Residues methionine 1–leucine 270 are amidoligase domain. A CTP-binding site is contributed by serine 13. Serine 13 contacts UTP. Residues serine 14–isoleucine 19 and aspartate 71 each bind ATP. Residues aspartate 71 and glutamate 144 each contribute to the Mg(2+) site. CTP contacts are provided by residues aspartate 151–glutamate 153, lysine 191–glutamine 196, and lysine 227. Residues lysine 191 to glutamine 196 and lysine 227 each bind UTP. In terms of domain architecture, Glutamine amidotransferase type-1 spans threonine 295–alanine 547. Residue glycine 356 participates in L-glutamine binding. The active-site Nucleophile; for glutamine hydrolysis is cysteine 383. L-glutamine-binding positions include leucine 384–glutamine 387, glutamate 407, and arginine 473. Catalysis depends on residues histidine 520 and glutamate 522.

It belongs to the CTP synthase family. As to quaternary structure, homotetramer.

It carries out the reaction UTP + L-glutamine + ATP + H2O = CTP + L-glutamate + ADP + phosphate + 2 H(+). The enzyme catalyses L-glutamine + H2O = L-glutamate + NH4(+). It catalyses the reaction UTP + NH4(+) + ATP = CTP + ADP + phosphate + 2 H(+). Its pathway is pyrimidine metabolism; CTP biosynthesis via de novo pathway; CTP from UDP: step 2/2. Allosterically activated by GTP, when glutamine is the substrate; GTP has no effect on the reaction when ammonia is the substrate. The allosteric effector GTP functions by stabilizing the protein conformation that binds the tetrahedral intermediate(s) formed during glutamine hydrolysis. Inhibited by the product CTP, via allosteric rather than competitive inhibition. In terms of biological role, catalyzes the ATP-dependent amination of UTP to CTP with either L-glutamine or ammonia as the source of nitrogen. Regulates intracellular CTP levels through interactions with the four ribonucleotide triphosphates. This chain is CTP synthase, found in Burkholderia vietnamiensis (strain G4 / LMG 22486) (Burkholderia cepacia (strain R1808)).